The chain runs to 400 residues: Formate-dependent phosphoribosylglycinamide formyltransferase (400 aa).

N(1)-(5-phospho-beta-D-ribosyl)glycinamide-binding positions include 22–23 (EL) and Glu-82. ATP-binding positions include Arg-115, Lys-156, 161–166 (SSGKGQ), 196–199 (EGFI), and Glu-204. Residues 120 to 309 (RLAAETLGLP…EFALHARAIL (190 aa)) enclose the ATP-grasp domain. Mg(2+) is bound by residues Glu-268 and Glu-280. Residues Asp-287, Lys-361, and 368–369 (RR) contribute to the N(1)-(5-phospho-beta-D-ribosyl)glycinamide site.

The protein belongs to the PurK/PurT family. Homodimer.

The catalysed reaction is N(1)-(5-phospho-beta-D-ribosyl)glycinamide + formate + ATP = N(2)-formyl-N(1)-(5-phospho-beta-D-ribosyl)glycinamide + ADP + phosphate + H(+). The protein operates within purine metabolism; IMP biosynthesis via de novo pathway; N(2)-formyl-N(1)-(5-phospho-D-ribosyl)glycinamide from N(1)-(5-phospho-D-ribosyl)glycinamide (formate route): step 1/1. Functionally, involved in the de novo purine biosynthesis. Catalyzes the transfer of formate to 5-phospho-ribosyl-glycinamide (GAR), producing 5-phospho-ribosyl-N-formylglycinamide (FGAR). Formate is provided by PurU via hydrolysis of 10-formyl-tetrahydrofolate. The sequence is that of Formate-dependent phosphoribosylglycinamide formyltransferase from Xanthomonas axonopodis pv. citri (strain 306).